The chain runs to 159 residues: MAKTKKHLLTQEGLKKLQAELRLLVDVKRADVIKLIQEAREQGDLSENADYDSAKATQSEIESRITEIQDILNHYEIIKEVDTKNKRVIVGAKVTIHDHSDECNYTYEIVGPIESDPAENKISHESPVAKAIMDKKEGESAEVIGIEHPYKVTIKKIVL.

Belongs to the GreA/GreB family.

Functionally, necessary for efficient RNA polymerase transcription elongation past template-encoded arresting sites. The arresting sites in DNA have the property of trapping a certain fraction of elongating RNA polymerases that pass through, resulting in locked ternary complexes. Cleavage of the nascent transcript by cleavage factors such as GreA or GreB allows the resumption of elongation from the new 3'terminus. GreA releases sequences of 2 to 3 nucleotides. This Mycoplasmoides gallisepticum (strain R(low / passage 15 / clone 2)) (Mycoplasma gallisepticum) protein is Transcription elongation factor GreA.